The sequence spans 334 residues: Cytosolic Fe-S cluster assembly factor NUBP1 homolog (334 aa).

Residues 1–24 (MSSAEVTAAAKPADAPEHCPGTAS) are disordered. 4 residues coordinate [4Fe-4S] cluster: cysteine 19, cysteine 33, cysteine 36, and cysteine 42. ATP is bound at residue 72 to 79 (GKGGVGKS). Residues cysteine 247 and cysteine 250 each coordinate [4Fe-4S] cluster.

It belongs to the Mrp/NBP35 ATP-binding proteins family. NUBP1/NBP35 subfamily. Heterotetramer of 2 NUBP1 and 2 NUBP2 chains. It depends on [4Fe-4S] cluster as a cofactor.

The protein localises to the cytoplasm. In terms of biological role, component of the cytosolic iron-sulfur (Fe/S) protein assembly (CIA) machinery. Required for maturation of extramitochondrial Fe-S proteins. The NUBP1-NUBP2 heterotetramer forms a Fe-S scaffold complex, mediating the de novo assembly of an Fe-S cluster and its transfer to target apoproteins. The sequence is that of Cytosolic Fe-S cluster assembly factor NUBP1 homolog from Culex quinquefasciatus (Southern house mosquito).